The chain runs to 406 residues: uncharacterized protein (406 aa).

The next 10 membrane-spanning stretches (helical) occupy residues 7–27, 43–63, 69–89, 98–118, 155–175, 220–240, 253–273, 297–317, 352–372, and 374–394; these read SILF…MVVI, VTLI…LITI, LTII…FYAL, LILV…FSPL, GLII…FLLF, IIIM…SVSL, WWGF…FIIY, LTLI…VLFM, VQFI…FLGV, and LVYV…FSQL.

The protein belongs to the major facilitator superfamily.

Its subcellular location is the cell membrane. This is an uncharacterized protein from Bacillus subtilis (strain 168).